Reading from the N-terminus, the 164-residue chain is SsrA-binding protein (164 aa).

Residues 141–164 form a disordered region; the sequence is KLHDKRQDEKQKSIKKEINSALKR. Positions 145–158 are enriched in basic and acidic residues; sequence KRQDEKQKSIKKEI.

It belongs to the SmpB family.

It is found in the cytoplasm. In terms of biological role, required for rescue of stalled ribosomes mediated by trans-translation. Binds to transfer-messenger RNA (tmRNA), required for stable association of tmRNA with ribosomes. tmRNA and SmpB together mimic tRNA shape, replacing the anticodon stem-loop with SmpB. tmRNA is encoded by the ssrA gene; the 2 termini fold to resemble tRNA(Ala) and it encodes a 'tag peptide', a short internal open reading frame. During trans-translation Ala-aminoacylated tmRNA acts like a tRNA, entering the A-site of stalled ribosomes, displacing the stalled mRNA. The ribosome then switches to translate the ORF on the tmRNA; the nascent peptide is terminated with the 'tag peptide' encoded by the tmRNA and targeted for degradation. The ribosome is freed to recommence translation, which seems to be the essential function of trans-translation. The chain is SsrA-binding protein from Prochlorococcus marinus (strain AS9601).